Here is a 2628-residue protein sequence, read N- to C-terminus: Hemagglutinin A (2628 aa).

Residues 1–24 form the signal peptide; the sequence is MRKLNSLFSLAVLLSLLCWGQTAA. Peptidase C25-like regions lie at residues 25-539, 540-995, 996-1451, 1452-1907, and 2074-2628; these read AQGG…TPPP, GGTS…TPPP, and IDAD…LAVK. Disordered regions lie at residues 493-512, 520-546, 944-1002, 1400-1458, 1856-1881, 1890-1909, and 2336-2358; these read WDAP…LSES, SWKT…SFAG, KWDA…SFAG, KWDA…SESF, KTID…PPGG, and SSWK…PPGG. The segment covering 496-508 has biased composition (low complexity); it reads PNGTPNPNPGTTT.

It belongs to the peptidase C25 family.

In terms of biological role, agglutinates erythrocytes. This chain is Hemagglutinin A (hagA), found in Porphyromonas gingivalis (Bacteroides gingivalis).